Reading from the N-terminus, the 469-residue chain is Ribosomal protein uS12 methylthiotransferase RimO (469 aa).

One can recognise an MTTase N-terminal domain in the interval Thr-3–Ala-119. [4Fe-4S] cluster-binding residues include Cys-12, Cys-48, Cys-82, Cys-154, Cys-158, and Cys-161. A Radical SAM core domain is found at Ser-140 to Ala-370. In terms of domain architecture, TRAM spans Gln-373–Ala-441. Positions Pro-444–Arg-469 are disordered. The segment covering Ala-447 to Arg-461 has biased composition (low complexity).

The protein belongs to the methylthiotransferase family. RimO subfamily. It depends on [4Fe-4S] cluster as a cofactor.

It localises to the cytoplasm. The catalysed reaction is L-aspartate(89)-[ribosomal protein uS12]-hydrogen + (sulfur carrier)-SH + AH2 + 2 S-adenosyl-L-methionine = 3-methylsulfanyl-L-aspartate(89)-[ribosomal protein uS12]-hydrogen + (sulfur carrier)-H + 5'-deoxyadenosine + L-methionine + A + S-adenosyl-L-homocysteine + 2 H(+). Catalyzes the methylthiolation of an aspartic acid residue of ribosomal protein uS12. The protein is Ribosomal protein uS12 methylthiotransferase RimO of Anaeromyxobacter sp. (strain K).